A 308-amino-acid polypeptide reads, in one-letter code: MRKITIATRGSKLALWQANHISDLLREEYPGIEVQLLKIKTKGDKILDVPLAKVGGKGLFVKEIEEALLDGRADLAVHSMKDVPTELPEGLEVGIIPPREAETDTLLSVKYDSLKDLPAGAVVGTSSLRRQSQVLALRDDLKIESLRGNLDTRVGKLLNGEFDAIVVATAGLNRLKLSAPKSEILGPPTFLPAVAQGALGIEYRIEDTEIQDILAFLHDEMTARQVKAERGFLTGLDGGCQVPIAAWSQLESDQVKLTGFVADIDGSSPIRMEKTGPAEDAWDIGLALAEEVLAAGAKEILDRVYDKC.

The residue at position 240 (Cys-240) is an S-(dipyrrolylmethanemethyl)cysteine.

It belongs to the HMBS family. Monomer. Dipyrromethane serves as cofactor.

It carries out the reaction 4 porphobilinogen + H2O = hydroxymethylbilane + 4 NH4(+). It functions in the pathway porphyrin-containing compound metabolism; protoporphyrin-IX biosynthesis; coproporphyrinogen-III from 5-aminolevulinate: step 2/4. Functionally, tetrapolymerization of the monopyrrole PBG into the hydroxymethylbilane pre-uroporphyrinogen in several discrete steps. This is Porphobilinogen deaminase from Maridesulfovibrio salexigens (strain ATCC 14822 / DSM 2638 / NCIMB 8403 / VKM B-1763) (Desulfovibrio salexigens).